The following is a 1033-amino-acid chain: RNA cytidine acetyltransferase (1033 aa).

Residues Gly285–Leu294 and Arg465 each bind ATP. The 135-residue stretch at Val560–Pro694 folds into the N-acetyltransferase domain. Acetyl-CoA contacts are provided by residues Ile626–Val628, Val633–Thr639, and Arg727. The tract at residues Glu988–Lys1033 is disordered. The span at Lys1005 to Ser1026 shows a compositional bias: basic and acidic residues.

This sequence belongs to the RNA cytidine acetyltransferase family. NAT10 subfamily. As to quaternary structure, interacts with tan1.

The protein localises to the nucleus. It is found in the nucleolus. It catalyses the reaction a cytidine in 18S rRNA + acetyl-CoA + ATP + H2O = an N(4)-acetylcytidine in 18S rRNA + ADP + phosphate + CoA + H(+). The enzyme catalyses a cytidine in tRNA + acetyl-CoA + ATP + H2O = an N(4)-acetylcytidine in tRNA + ADP + phosphate + CoA + H(+). In terms of biological role, RNA cytidine acetyltransferase with specificity toward both 18S rRNA and tRNAs. Catalyzes the formation of N(4)-acetylcytidine (ac4C) at positions 1297 and 1815 in 18S rRNA. Required for early nucleolar cleavages of precursor rRNA at sites A0, A1 and A2 during 18S rRNA synthesis. Catalyzes the formation of ac4C in serine and leucine tRNAs. Requires the tRNA-binding adapter protein tan1 for full tRNA acetyltransferase activity but not for 18S rRNA acetylation. The polypeptide is RNA cytidine acetyltransferase (Schizosaccharomyces pombe (strain 972 / ATCC 24843) (Fission yeast)).